We begin with the raw amino-acid sequence, 407 residues long: Shaggy-related protein kinase GSK1 (407 aa).

The span at 1-19 (MEAPPGPEPMELDAPPPPA) shows a compositional bias: pro residues. The interval 1-21 (MEAPPGPEPMELDAPPPPAAV) is disordered. A Protein kinase domain is found at 68-352 (YMAERVVGTG…ALDACAHSFF (285 aa)). ATP is bound by residues 74-82 (VGTGSFGIV) and K97. D193 acts as the Proton acceptor in catalysis.

Belongs to the protein kinase superfamily. CMGC Ser/Thr protein kinase family. GSK-3 subfamily. Interacts with LIC. Highly expressed in the entire young panicles, spikelets, awns, vascular bundles of palea and lemma, stigma and rachilla. Expressed in root tips, root hairs, lamina joint in the collar region, vascular bundles of coleoptiles.

It catalyses the reaction L-seryl-[protein] + ATP = O-phospho-L-seryl-[protein] + ADP + H(+). The enzyme catalyses L-threonyl-[protein] + ATP = O-phospho-L-threonyl-[protein] + ADP + H(+). In terms of biological role, probable serine-threonine kinase that may act as a negative regulator of brassinosteroid (BR) signaling during flower development. May have physiological roles in stress signal-transduction pathways. Phosphorylates LIC in response to BR perception. In Oryza sativa subsp. japonica (Rice), this protein is Shaggy-related protein kinase GSK1.